Here is a 66-residue protein sequence, read N- to C-terminus: uncharacterized protein (66 aa).

The protein belongs to the YeeT/YkfH/YpjJ family.

This is an uncharacterized protein from Escherichia coli (strain K12).